We begin with the raw amino-acid sequence, 117 residues long: DNA-directed RNA polymerase subunit omega (117 aa).

The protein belongs to the RNA polymerase subunit omega family. The RNAP catalytic core consists of 2 alpha, 1 beta, 1 beta' and 1 omega subunit. When a sigma factor is associated with the core the holoenzyme is formed, which can initiate transcription.

It catalyses the reaction RNA(n) + a ribonucleoside 5'-triphosphate = RNA(n+1) + diphosphate. Its function is as follows. Promotes RNA polymerase assembly. Latches the N- and C-terminal regions of the beta' subunit thereby facilitating its interaction with the beta and alpha subunits. The protein is DNA-directed RNA polymerase subunit omega of Ruegeria sp. (strain TM1040) (Silicibacter sp.).